Here is an 891-residue protein sequence, read N- to C-terminus: Inter-alpha-trypsin inhibitor heavy chain H3 (891 aa).

A signal peptide spans 1–20 (MALAQWPYLILALLSGLAVS). The propeptide occupies 21-34 (GFPRNPSLLLGKRS). The VIT domain occupies 29–158 (LLGKRSLPGR…KVTFELTYEE (130 aa)). An N-linked (GlcNAc...) asparagine glycan is attached at N91. Positions 284–467 (SVVFVIDVSG…LQLQGFYEEV (184 aa)) constitute a VWFA domain. D651 is modified (aspartate 1-(chondroitin 4-sulfate)-ester). Residues 652 to 891 (PHFIIQIPEK…HRDYIVPNLF (240 aa)) constitute a propeptide that is removed on maturation.

The protein belongs to the ITIH family. As to quaternary structure, I-alpha-I plasma protease inhibitors are assembled from one or two heavy chains (H1, H2 or H3) and one light chain, bikunin. Inter-alpha-inhibitor (I-alpha-I) is composed of H1, H2 and bikunin, inter-alpha-like inhibitor (I-alpha-LI) of H2 and bikunin, and pre-alpha-inhibitor (P-alpha-I) of H3 and bikunin.

The protein localises to the secreted. May act as a carrier of hyaluronan in serum or as a binding protein between hyaluronan and other matrix protein, including those on cell surfaces in tissues to regulate the localization, synthesis and degradation of hyaluronan which are essential to cells undergoing biological processes. The protein is Inter-alpha-trypsin inhibitor heavy chain H3 (ITIH3) of Bos taurus (Bovine).